The following is a 320-amino-acid chain: Uroplakin-3b (320 aa).

An N-terminal signal peptide occupies residues 1–29 (MGLPWGQPHLGLQMLLLALNCLRPSLSLG). Over 30–240 (EWGSWMDASS…LHPLFSGRPP (211 aa)) the chain is Lumenal. Asn-133 is a glycosylation site (N-linked (GlcNAc...) asparagine). The chain crosses the membrane as a helical span at residues 241–266 (TLGLLGSLYHALLQPVVAGGGPGAAA). Topologically, residues 267–320 (DRLLHGQALHDPPHPTQRGRHTAGGLQAWPGPPPQPQPLAWPLCMGLGEMGRWE) are cytoplasmic. A disordered region spans residues 273–303 (QALHDPPHPTQRGRHTAGGLQAWPGPPPQPQ).

It belongs to the uroplakin-3 family. In terms of assembly, heterodimer with uroplakin-1B (UPK1B).

The protein localises to the cell membrane. In terms of biological role, component of the asymmetric unit membrane (AUM); a highly specialized biomembrane elaborated by terminally differentiated urothelial cells. May play an important role in AUM-cytoskeleton interaction in terminally differentiated urothelial cells. It also contributes to the formation of urothelial glycocalyx which may play an important role in preventing bacterial adherence. This is Uroplakin-3b (UPK3B) from Homo sapiens (Human).